The chain runs to 505 residues: Glycerol kinase (505 aa).

ADP is bound at residue threonine 14. ATP-binding residues include threonine 14, threonine 15, and serine 16. Threonine 14 is a sn-glycerol 3-phosphate binding site. ADP is bound at residue arginine 18. Arginine 84, glutamate 85, tyrosine 136, and aspartate 246 together coordinate sn-glycerol 3-phosphate. Glycerol contacts are provided by arginine 84, glutamate 85, tyrosine 136, aspartate 246, and glutamine 247. ADP contacts are provided by threonine 268 and glycine 311. Positions 268, 311, 315, and 412 each coordinate ATP. 2 residues coordinate ADP: glycine 412 and asparagine 416.

Belongs to the FGGY kinase family.

It catalyses the reaction glycerol + ATP = sn-glycerol 3-phosphate + ADP + H(+). It functions in the pathway polyol metabolism; glycerol degradation via glycerol kinase pathway; sn-glycerol 3-phosphate from glycerol: step 1/1. With respect to regulation, inhibited by fructose 1,6-bisphosphate (FBP). Functionally, key enzyme in the regulation of glycerol uptake and metabolism. Catalyzes the phosphorylation of glycerol to yield sn-glycerol 3-phosphate. The chain is Glycerol kinase from Vibrio vulnificus (strain CMCP6).